Consider the following 348-residue polypeptide: UDP-glucose 4-epimerase (348 aa).

NAD(+)-binding positions include 12-14 (GYI), 33-37 (DNFHN), 66-67 (DI), phenylalanine 88, and lysine 92. 132-134 (SAT) lines the substrate pocket. Tyrosine 157 (proton acceptor) is an active-site residue. Lysine 161 and tyrosine 185 together coordinate NAD(+). Residues 185–187 (YFN), 206–208 (NNL), 224–226 (NVF), arginine 239, and 300–303 (REGD) contribute to the substrate site.

It belongs to the NAD(P)-dependent epimerase/dehydratase family. Homodimer. Requires NAD(+) as cofactor.

It catalyses the reaction UDP-alpha-D-glucose = UDP-alpha-D-galactose. The enzyme catalyses UDP-N-acetyl-alpha-D-glucosamine = UDP-N-acetyl-alpha-D-galactosamine. The protein operates within carbohydrate metabolism; galactose metabolism. Its function is as follows. Catalyzes two distinct but analogous reactions: the reversible epimerization of UDP-glucose to UDP-galactose and the reversible epimerization of UDP-N-acetylglucosamine to UDP-N-acetylgalactosamine. The reaction with UDP-Gal plays a critical role in the Leloir pathway of galactose catabolism in which galactose is converted to the glycolytic intermediate glucose 6-phosphate. It contributes to the catabolism of dietary galactose and enables the endogenous biosynthesis of both UDP-Gal and UDP-GalNAc when exogenous sources are limited. Both UDP-sugar interconversions are important in the synthesis of glycoproteins and glycolipids. This chain is UDP-glucose 4-epimerase, found in Bos taurus (Bovine).